Reading from the N-terminus, the 122-residue chain is Large ribosomal subunit protein uL18 (122 aa).

It belongs to the universal ribosomal protein uL18 family. In terms of assembly, part of the 50S ribosomal subunit; part of the 5S rRNA/L5/L18/L25 subcomplex. Contacts the 5S and 23S rRNAs.

In terms of biological role, this is one of the proteins that bind and probably mediate the attachment of the 5S RNA into the large ribosomal subunit, where it forms part of the central protuberance. In Lachnospira eligens (strain ATCC 27750 / DSM 3376 / VPI C15-48 / C15-B4) (Eubacterium eligens), this protein is Large ribosomal subunit protein uL18.